Consider the following 317-residue polypeptide: tRNA-cytidine(32) 2-sulfurtransferase (317 aa).

A PP-loop motif motif is present at residues 63 to 68; the sequence is SGGKDS. [4Fe-4S] cluster is bound by residues Cys-138, Cys-141, and Cys-229.

Belongs to the TtcA family. In terms of assembly, homodimer. Mg(2+) serves as cofactor. [4Fe-4S] cluster is required as a cofactor.

The protein resides in the cytoplasm. It carries out the reaction cytidine(32) in tRNA + S-sulfanyl-L-cysteinyl-[cysteine desulfurase] + AH2 + ATP = 2-thiocytidine(32) in tRNA + L-cysteinyl-[cysteine desulfurase] + A + AMP + diphosphate + H(+). Its pathway is tRNA modification. In terms of biological role, catalyzes the ATP-dependent 2-thiolation of cytidine in position 32 of tRNA, to form 2-thiocytidine (s(2)C32). The sulfur atoms are provided by the cysteine/cysteine desulfurase (IscS) system. This Janthinobacterium sp. (strain Marseille) (Minibacterium massiliensis) protein is tRNA-cytidine(32) 2-sulfurtransferase.